Consider the following 179-residue polypeptide: Disulfide bond formation protein B (179 aa).

The Cytoplasmic portion of the chain corresponds to 1–14; the sequence is MLSYFKELSLRRPA. A helical transmembrane segment spans residues 15–31; that stretch reads WLLLATLACTLEVTGLY. Residues 32 to 49 lie on the Periplasmic side of the membrane; that stretch reads FQHKLGLIPCVMCIYERV. A disulfide bridge connects residues Cys41 and Cys44. Residues 50 to 65 form a helical membrane-spanning segment; the sequence is ALTGLLIAGLIALIAP. Over 66 to 72 the chain is Cytoplasmic; sequence NFFLFRW. A helical membrane pass occupies residues 73-90; the sequence is LALVLWGFSAFKGLSLSI. Residues 91–146 lie on the Periplasmic side of the membrane; that stretch reads KHYDYQANPSPWNQCEFKPQFPQTIPLDEWFPNIFAAGTVNCSEKQWQMLGWGMPE. Cys105 and Cys132 are joined by a disulfide. The helical transmembrane segment at 147–165 threads the bilayer; that stretch reads WLIVAFSLFMLFFLIVFMS. Topologically, residues 166–179 are cytoplasmic; it reads QFKRAKPQYRSVFR.

The protein belongs to the DsbB family.

Its subcellular location is the cell inner membrane. In terms of biological role, required for disulfide bond formation in some periplasmic proteins. Acts by oxidizing the DsbA protein. This chain is Disulfide bond formation protein B, found in Haemophilus ducreyi (strain 35000HP / ATCC 700724).